A 464-amino-acid chain; its full sequence is Protein FAM90A7 (464 aa).

Disordered stretches follow at residues 1–42 (MMAR…DPRL), 69–387 (VPAT…AGHD), and 410–437 (AAPS…SEAP). 2 stretches are compositionally biased toward basic and acidic residues: residues 74–89 (GKKE…KPRA) and 97–111 (NKDK…RQQD). Low complexity predominate over residues 180–197 (LASLSPLRKASLSSSSSL).

Belongs to the FAM90 family.

The sequence is that of Protein FAM90A7 from Homo sapiens (Human).